The following is a 107-amino-acid chain: Cytochrome b-c1 complex subunit 8 (107 aa).

Residues 1–8 constitute a propeptide, plays a role in role in intramitochondrial sorting; it reads MRPTQTML. The Mitochondrial matrix segment spans residues 1–62; the sequence is MRPTQTMLGG…TAHDAVFNTF (62 aa). A helical membrane pass occupies residues 63 to 93; it reads RRVSSQFLYWAPSLVAGYYIMNWAIERNHYL. Residues 94 to 107 are Mitochondrial intermembrane-facing; that stretch reads NSKAGRAEFAGQEE.

The protein belongs to the UQCRQ/QCR8 family. As to quaternary structure, component of the ubiquinol-cytochrome c oxidoreductase (cytochrome b-c1 complex, complex III, CIII), a multisubunit enzyme composed of 10 subunits. The complex is composed of 3 respiratory subunits cytochrome b (cob), cytochrome c1 (cyt-1) and Rieske protein (fes-1), 2 core protein subunits pep and ucr-1, and 5 low-molecular weight protein subunits qcr6, qcr7, qcr8, qcr9 and probably NCU16844/qcr10. The complex exists as an obligatory dimer and forms supercomplexes (SCs) in the inner mitochondrial membrane with NADH-ubiquinone oxidoreductase (complex I, CI) and cytochrome c oxidase (complex IV, CIV), resulting in different assemblies (supercomplexes SCI(1)III(2), SCIII(2)IV(1) and SCIII(2)IV(2) as well as higher order I(x)III(y)IV(z) megacomplexes).

Its subcellular location is the mitochondrion inner membrane. Component of the ubiquinol-cytochrome c oxidoreductase, a multisubunit transmembrane complex that is part of the mitochondrial electron transport chain which drives oxidative phosphorylation. The respiratory chain contains 3 multisubunit complexes succinate dehydrogenase (complex II, CII), ubiquinol-cytochrome c oxidoreductase (cytochrome b-c1 complex, complex III, CIII) and cytochrome c oxidase (complex IV, CIV), that cooperate to transfer electrons derived from NADH and succinate to molecular oxygen, creating an electrochemical gradient over the inner membrane that drives transmembrane transport and the ATP synthase. The cytochrome b-c1 complex catalyzes electron transfer from ubiquinol to cytochrome c, linking this redox reaction to translocation of protons across the mitochondrial inner membrane, with protons being carried across the membrane as hydrogens on the quinol. In the process called Q cycle, 2 protons are consumed from the matrix, 4 protons are released into the intermembrane space and 2 electrons are passed to cytochrome c. This chain is Cytochrome b-c1 complex subunit 8 (qcr8), found in Neurospora crassa (strain ATCC 24698 / 74-OR23-1A / CBS 708.71 / DSM 1257 / FGSC 987).